The chain runs to 640 residues: Choline O-acetyltransferase (640 aa).

The segment covering 1-22 (MPDLEKDMQKKEKDSRSKDEPA) has biased composition (basic and acidic residues). Residues 1–28 (MPDLEKDMQKKEKDSRSKDEPAVPKLPV) are disordered. Catalysis depends on H334, which acts as the Proton acceptor. Residues 412-424 (GKEF…TSPD), S450, and Q551 each bind CoA.

Belongs to the carnitine/choline acetyltransferase family. In terms of tissue distribution, detected in brain and in embryonic retina.

The catalysed reaction is choline + acetyl-CoA = acetylcholine + CoA. Catalyzes the reversible synthesis of acetylcholine (ACh) from acetyl CoA and choline at cholinergic synapses. The sequence is that of Choline O-acetyltransferase (CHAT) from Gallus gallus (Chicken).